Reading from the N-terminus, the 261-residue chain is U11/U12 small nuclear ribonucleoprotein 31 kDa protein (261 aa).

The interval 18-51 (YYRYSSVAAPPPSNPKHQPSSSAKSSAPGGGSGG) is disordered. Positions 57–135 (STLYVSNLDF…RKLTVSIAAD (79 aa)) constitute an RRM domain. The CCHC-type zinc-finger motif lies at 153–169 (RCYECGDEGHLSYECPK). The interval 165-261 (YECPKNQLGP…YFSDESDDED (97 aa)) is disordered. Over residues 226–235 (AGERLRKREA) the composition is skewed to basic and acidic residues.

As to quaternary structure, component of the U11/U12 snRNPs that are part of the U12-type spliceosome. As to expression, ubiquitous. Abundantly expressed in the shoot apical neristem.

The protein resides in the nucleus. RNA chaperone required for proper U12 intron splicing and for normal growth and development of plants. Mainly responsible for meristem activity. Plays a role in regulating cell division. This chain is U11/U12 small nuclear ribonucleoprotein 31 kDa protein (SNRNP31), found in Arabidopsis thaliana (Mouse-ear cress).